We begin with the raw amino-acid sequence, 107 residues long: SOSS complex subunit C (107 aa).

It belongs to the SOSS-C family. As to quaternary structure, belongs to the multiprotein complex Integrator. Component of the SOSS complex, composed of soss-b (soss-b1/nabp2 or soss-b2/nabp1), soss-a/ints3 and soss-c/inip.

It localises to the nucleus. Component of the SOSS complex, a multiprotein complex that functions downstream of the MRN complex to promote DNA repair and G2/M checkpoint. The SOSS complex associates with single-stranded DNA at DNA lesions and influences diverse endpoints in the cellular DNA damage response including cell-cycle checkpoint activation, recombinational repair and maintenance of genomic stability. Required for efficient homologous recombination-dependent repair of double-strand breaks (DSBs). The sequence is that of SOSS complex subunit C (inip) from Salmo salar (Atlantic salmon).